The following is a 310-amino-acid chain: Oxygen-dependent coproporphyrinogen-III oxidase (310 aa).

S97 is a binding site for substrate. Residues H101 and H111 each coordinate a divalent metal cation. H111 serves as the catalytic Proton donor. 113–115 (NFR) is a binding site for substrate. A divalent metal cation-binding residues include H150 and H180. Residues 245 to 280 (YVEFNLLYDRGTRFGLEFGGRTESILMSLPPRVVWR) form an important for dimerization region. Substrate is bound at residue 263 to 265 (GGR).

It belongs to the aerobic coproporphyrinogen-III oxidase family. In terms of assembly, homodimer. A divalent metal cation is required as a cofactor.

The protein resides in the cytoplasm. The catalysed reaction is coproporphyrinogen III + O2 + 2 H(+) = protoporphyrinogen IX + 2 CO2 + 2 H2O. Its pathway is porphyrin-containing compound metabolism; protoporphyrin-IX biosynthesis; protoporphyrinogen-IX from coproporphyrinogen-III (O2 route): step 1/1. Involved in the heme biosynthesis. Catalyzes the aerobic oxidative decarboxylation of propionate groups of rings A and B of coproporphyrinogen-III to yield the vinyl groups in protoporphyrinogen-IX. The polypeptide is Oxygen-dependent coproporphyrinogen-III oxidase (Coxiella burnetii (strain Dugway 5J108-111)).